Here is a 325-residue protein sequence, read N- to C-terminus: NADH-quinone oxidoreductase subunit H (325 aa).

Transmembrane regions (helical) follow at residues 11–31 (ILLTVLKAVVILLVVVTCGAF), 81–101 (VIFTLAPMIAFTSLLLAFAIV), 114–134 (IGILFFLMMAGLAVYAVLFAG), 154–174 (LSYEVFLGLSLMGVVAQAGSF), 186–206 (VWNVIPQFFGFITFAIAGVAV), 237–257 (FFVGEYIGIVTISALMVTLFF), 265–285 (LPPFIWFALKTAFFMMMFILI), and 304–324 (ICLPLTLINLLVTAAVILWQA).

The protein belongs to the complex I subunit 1 family. In terms of assembly, NDH-1 is composed of 13 different subunits. Subunits NuoA, H, J, K, L, M, N constitute the membrane sector of the complex.

It is found in the cell inner membrane. The catalysed reaction is a quinone + NADH + 5 H(+)(in) = a quinol + NAD(+) + 4 H(+)(out). NDH-1 shuttles electrons from NADH, via FMN and iron-sulfur (Fe-S) centers, to quinones in the respiratory chain. The immediate electron acceptor for the enzyme in this species is believed to be ubiquinone. Couples the redox reaction to proton translocation (for every two electrons transferred, four hydrogen ions are translocated across the cytoplasmic membrane), and thus conserves the redox energy in a proton gradient. This subunit may bind ubiquinone. In Escherichia coli O45:K1 (strain S88 / ExPEC), this protein is NADH-quinone oxidoreductase subunit H.